A 78-amino-acid chain; its full sequence is Acyl carrier protein (78 aa).

A Carrier domain is found at S2–Q77. S37 carries the O-(pantetheine 4'-phosphoryl)serine modification.

It belongs to the acyl carrier protein (ACP) family. 4'-phosphopantetheine is transferred from CoA to a specific serine of apo-ACP by AcpS. This modification is essential for activity because fatty acids are bound in thioester linkage to the sulfhydryl of the prosthetic group.

It is found in the cytoplasm. The protein operates within lipid metabolism; fatty acid biosynthesis. Its function is as follows. Carrier of the growing fatty acid chain in fatty acid biosynthesis. The protein is Acyl carrier protein of Comamonas testosteroni (Pseudomonas testosteroni).